Reading from the N-terminus, the 488-residue chain is NADH-quinone oxidoreductase subunit N (488 aa).

The next 14 helical transmembrane spans lie at 15–35, 42–62, 79–99, 108–128, 133–153, 168–188, 209–229, 243–263, 277–297, 305–325, 333–353, 376–396, 409–429, and 456–476; these read LALP…VDLY, GMTF…AIVA, NLAA…FAYC, LLKG…MIMA, LMTV…MVAF, FVLG…IYGA, WLLL…FGAV, PTTV…ALFV, WQPM…LAAL, MLAY…IAGT, LFYA…IILL, MALM…TVGF, VGLV…AFYY, and GLLV…DSLI.

The protein belongs to the complex I subunit 2 family. In terms of assembly, NDH-1 is composed of 14 different subunits. Subunits NuoA, H, J, K, L, M, N constitute the membrane sector of the complex.

The protein localises to the cell inner membrane. The catalysed reaction is a quinone + NADH + 5 H(+)(in) = a quinol + NAD(+) + 4 H(+)(out). In terms of biological role, NDH-1 shuttles electrons from NADH, via FMN and iron-sulfur (Fe-S) centers, to quinones in the respiratory chain. The immediate electron acceptor for the enzyme in this species is believed to be ubiquinone. Couples the redox reaction to proton translocation (for every two electrons transferred, four hydrogen ions are translocated across the cytoplasmic membrane), and thus conserves the redox energy in a proton gradient. The protein is NADH-quinone oxidoreductase subunit N of Alkalilimnicola ehrlichii (strain ATCC BAA-1101 / DSM 17681 / MLHE-1).